The chain runs to 147 residues: MRNFGIILAHTYKNRLMSKAFLISTVITLAFMLVLTNMDPYVNMLRGTSEAFSAAVAGADSIQVSPFDEPIQPSTSFSRRIARNTSLILMEESHLAATQDASGGAWYVEHLTDEIIVCKFKVILILNSVREYTDVIADSIFKLSRGH.

To methylmalonyl-CoA mutase.

This is Methylmalonyl-CoA mutase homolog from Alkalihalophilus pseudofirmus (strain ATCC BAA-2126 / JCM 17055 / OF4) (Bacillus pseudofirmus).